Reading from the N-terminus, the 67-residue chain is Large ribosomal subunit protein bL32 (67 aa).

Positions 1-19 are enriched in basic residues; sequence MAVPKRKMSRANTRARRAQ. Residues 1-20 form a disordered region; sequence MAVPKRKMSRANTRARRAQW.

This sequence belongs to the bacterial ribosomal protein bL32 family.

The chain is Large ribosomal subunit protein bL32 from Paenarthrobacter aurescens (strain TC1).